Here is a 266-residue protein sequence, read N- to C-terminus: Short-chain dehydrogenase/reductase AacuF (266 aa).

NADP(+)-binding residues include L13, D57, and N85. Active-site proton donor residues include S145 and Y164. NADP(+) is bound by residues Y164, K168, and V198. K168 (lowers pKa of active site Tyr) is an active-site residue.

The protein belongs to the short-chain dehydrogenases/reductases (SDR) family.

It participates in secondary metabolite biosynthesis. In terms of biological role, short-chain dehydrogenase/reductase; part of the gene cluster that mediates the biosynthesis of the tetrahydroxanthone dimer secalonic acid D. The pathway begins with the synthesis of atrochrysone thioester by the polyketide synthase AacuL. The atrochrysone carboxyl ACP thioesterase AacuM then breaks the thioester bond and releases the atrochrysone carboxylic acid from AacuL. Atrochrysone carboxylic acid is decarboxylated by the decarboxylase AacuI, and oxidized by the anthrone oxygenase AacuG to yield emodin. Emodin is then reduced to emodin hydroquinone by a yet unidentified oxidoreductase. A-ring reduction by the short chain dehydrogenase AacuN, dehydration by the scytalone dehydratase-like protein AacuK and probable spontaneous re-oxidation, results in overall deoxygenation to chrysophanol. Baeyer-Villiger oxidation by the Baeyer-Villiger monooxygenase (BVMO) AacuH then yields monodictyphenone. Monodictyphenone is transformed into compounds with the tetrahydroxanthone skeleton via methylesterification by the methyltransferase AacuQ, followed by the action of the flavin-dependent monooxygenase AacuC, the isomerase AacuP, and the short chain dehydrogenase/reductase AacuF or AacuD. AacuF and AacuD should accept the same compound as a substrate but perform the ketoreduction with a different stereoselectivity, thus yielding blennolides B and A, respectively. In the final step of the biosynthesis, the cytochrome P450 monooxygenase AacuE accepts blennolide B and/or blennolide A to conduct the dimerization reaction to furnish the tetrahydroxanthone dimers, secalonic acids D, B, and F. The polypeptide is Short-chain dehydrogenase/reductase AacuF (Aspergillus aculeatus (strain ATCC 16872 / CBS 172.66 / WB 5094)).